The following is a 173-amino-acid chain: Alpha-crystallin A chain (173 aa).

Methionine 1 is modified (N-acetylmethionine). The interval methionine 1 to glutamate 63 is required for complex formation with BFSP1 and BFSP2. Glutamine 6 is modified (deamidated glutamine; partial). Position 45 is a phosphoserine (serine 45). Glutamine 50 is modified (deamidated glutamine; partial). A sHSP domain is found at leucine 52–serine 162. N6-acetyllysine is present on residues lysine 70 and lysine 99. Histidine 100 is a Zn(2+) binding site. Asparagine 101 bears the Deamidated asparagine; partial mark. Zn(2+) contacts are provided by glutamate 102 and histidine 107. The residue at position 122 (serine 122) is a Phosphoserine. Deamidated asparagine; partial is present on asparagine 123. Residues lysine 145–serine 173 form a disordered region. A Deamidated glutamine; partial modification is found at glutamine 147. Positions glycine 153–proline 167 are enriched in basic and acidic residues. Histidine 154 serves as a coordination point for Zn(2+). O-linked (GlcNAc) serine glycosylation is present at serine 162.

Belongs to the small heat shock protein (HSP20) family. In terms of assembly, heteromer composed of three CRYAA and one CRYAB subunits. Inter-subunit bridging via zinc ions enhances stability, which is crucial as there is no protein turn over in the lens. Can also form homodimers and homotetramers (dimers of dimers) which serve as the building blocks of homooligomers. Within homooligomers, the zinc-binding motif is created from residues of 3 different molecules. His-100 and Glu-102 from one molecule are ligands of the zinc ion, and His-107 and His-154 residues from additional molecules complete the site with tetrahedral coordination geometry. Part of a complex required for lens intermediate filament formation composed of BFSP1, BFSP2 and CRYAA. In terms of processing, acetylation at Lys-70 may increase chaperone activity. Undergoes age-dependent proteolytical cleavage at the C-terminus.

Its subcellular location is the cytoplasm. The protein resides in the nucleus. Functionally, contributes to the transparency and refractive index of the lens. Acts as a chaperone, preventing aggregation of various proteins under a wide range of stress conditions. Required for the correct formation of lens intermediate filaments as part of a complex composed of BFSP1, BFSP2 and CRYAA. The chain is Alpha-crystallin A chain (CRYAA) from Meriones unguiculatus (Mongolian jird).